The following is a 1345-amino-acid chain: DNA-directed RNA polymerase subunit beta (1345 aa).

It belongs to the RNA polymerase beta chain family. As to quaternary structure, the RNAP catalytic core consists of 2 alpha, 1 beta, 1 beta' and 1 omega subunit. When a sigma factor is associated with the core the holoenzyme is formed, which can initiate transcription.

The enzyme catalyses RNA(n) + a ribonucleoside 5'-triphosphate = RNA(n+1) + diphosphate. Functionally, DNA-dependent RNA polymerase catalyzes the transcription of DNA into RNA using the four ribonucleoside triphosphates as substrates. This is DNA-directed RNA polymerase subunit beta from Shewanella oneidensis (strain ATCC 700550 / JCM 31522 / CIP 106686 / LMG 19005 / NCIMB 14063 / MR-1).